The sequence spans 154 residues: uncharacterized protein (154 aa).

Residues 91-154 form a disordered region; that stretch reads PSEESWGCRQ…WGSPQPSRGA (64 aa). The segment covering 134–154 has biased composition (polar residues); that stretch reads SRDTSPLGGQSWGSPQPSRGA.

This is an uncharacterized protein from Homo sapiens (Human).